A 220-amino-acid chain; its full sequence is Deoxyribose-phosphate aldolase (220 aa).

Asp-89 serves as the catalytic Proton donor/acceptor. Residue Lys-152 is the Schiff-base intermediate with acetaldehyde of the active site. Catalysis depends on Lys-181, which acts as the Proton donor/acceptor.

Belongs to the DeoC/FbaB aldolase family. DeoC type 1 subfamily.

The protein localises to the cytoplasm. It catalyses the reaction 2-deoxy-D-ribose 5-phosphate = D-glyceraldehyde 3-phosphate + acetaldehyde. Its pathway is carbohydrate degradation; 2-deoxy-D-ribose 1-phosphate degradation; D-glyceraldehyde 3-phosphate and acetaldehyde from 2-deoxy-alpha-D-ribose 1-phosphate: step 2/2. In terms of biological role, catalyzes a reversible aldol reaction between acetaldehyde and D-glyceraldehyde 3-phosphate to generate 2-deoxy-D-ribose 5-phosphate. In Enterococcus faecalis (strain ATCC 700802 / V583), this protein is Deoxyribose-phosphate aldolase.